A 239-amino-acid polypeptide reads, in one-letter code: Probable transcriptional regulatory protein CD630_07950 (239 aa).

It belongs to the TACO1 family.

Its subcellular location is the cytoplasm. The sequence is that of Probable transcriptional regulatory protein CD630_07950 from Clostridioides difficile (strain 630) (Peptoclostridium difficile).